We begin with the raw amino-acid sequence, 303 residues long: Uridylate-specific endoribonuclease C (303 aa).

The N-terminal stretch at Met-1–Gly-16 is a signal peptide. The region spanning Thr-32–Ile-303 is the EndoU domain. Residues His-181, His-196, and Lys-239 contribute to the active site. N-linked (GlcNAc...) asparagine glycosylation is present at Asn-287.

The protein belongs to the ENDOU family. In terms of assembly, monomer. Requires Mn(2+) as cofactor.

It is found in the secreted. It carries out the reaction ribonucleotidyl-uridine-RNA = a 5'-end dephospho-uridine-RNA + a 3'-end 2',3'-cyclophospho-ribonucleotide-RNA. Functionally, endoribonuclease that cleaves single-stranded RNAs at 5' of uridylates and releases a product with a 2',3'-cyclic phosphate at the 3'-end. This Xenopus laevis (African clawed frog) protein is Uridylate-specific endoribonuclease C (endou-c).